A 154-amino-acid chain; its full sequence is Low molecular weight protein-tyrosine-phosphatase PtpA (154 aa).

Catalysis depends on C8, which acts as the Nucleophile. R14 is an active-site residue. D120 (proton donor) is an active-site residue.

This sequence belongs to the low molecular weight phosphotyrosine protein phosphatase family.

The catalysed reaction is O-phospho-L-tyrosyl-[protein] + H2O = L-tyrosyl-[protein] + phosphate. Its function is as follows. Dephosphorylates the phosphotyrosine-containing proteins. The sequence is that of Low molecular weight protein-tyrosine-phosphatase PtpA (ptpA) from Staphylococcus saprophyticus subsp. saprophyticus (strain ATCC 15305 / DSM 20229 / NCIMB 8711 / NCTC 7292 / S-41).